The sequence spans 405 residues: Serine--glyoxylate aminotransferase (405 aa).

Residue lysine 196 is modified to N6-(pyridoxal phosphate)lysine.

This sequence belongs to the class-V pyridoxal-phosphate-dependent aminotransferase family. It depends on pyridoxal 5'-phosphate as a cofactor.

The catalysed reaction is glyoxylate + L-serine = 3-hydroxypyruvate + glycine. The protein operates within one-carbon metabolism; formaldehyde assimilation via serine pathway. The chain is Serine--glyoxylate aminotransferase (sgaA) from Hyphomicrobium methylovorum.